The chain runs to 90 residues: DNA-binding protein HU-beta (90 aa).

It belongs to the bacterial histone-like protein family. Heterodimer of an alpha and a beta chain.

In terms of biological role, histone-like DNA-binding protein which is capable of wrapping DNA to stabilize it, and thus to prevent its denaturation under extreme environmental conditions. This chain is DNA-binding protein HU-beta (hupB), found in Salmonella typhi.